A 255-amino-acid chain; its full sequence is Ribonuclease PH (255 aa).

Residues R86 and 124–126 contribute to the phosphate site; that span reads GTR.

It belongs to the RNase PH family. As to quaternary structure, homohexameric ring arranged as a trimer of dimers.

It catalyses the reaction tRNA(n+1) + phosphate = tRNA(n) + a ribonucleoside 5'-diphosphate. Phosphorolytic 3'-5' exoribonuclease that plays an important role in tRNA 3'-end maturation. Removes nucleotide residues following the 3'-CCA terminus of tRNAs; can also add nucleotides to the ends of RNA molecules by using nucleoside diphosphates as substrates, but this may not be physiologically important. Probably plays a role in initiation of 16S rRNA degradation (leading to ribosome degradation) during starvation. The sequence is that of Ribonuclease PH from Geobacillus thermodenitrificans (strain NG80-2).